The chain runs to 209 residues: Ribosomal RNA large subunit methyltransferase E (209 aa).

S-adenosyl-L-methionine-binding residues include Gly63, Trp65, Asp83, Asp99, and Asp124. Catalysis depends on Lys164, which acts as the Proton acceptor.

Belongs to the class I-like SAM-binding methyltransferase superfamily. RNA methyltransferase RlmE family.

The protein resides in the cytoplasm. It carries out the reaction uridine(2552) in 23S rRNA + S-adenosyl-L-methionine = 2'-O-methyluridine(2552) in 23S rRNA + S-adenosyl-L-homocysteine + H(+). Its function is as follows. Specifically methylates the uridine in position 2552 of 23S rRNA at the 2'-O position of the ribose in the fully assembled 50S ribosomal subunit. This Serratia proteamaculans (strain 568) protein is Ribosomal RNA large subunit methyltransferase E.